The primary structure comprises 81 residues: Sulfur carrier protein TusA (81 aa).

The active-site Cysteine persulfide intermediate is the cysteine 19.

Belongs to the sulfur carrier protein TusA family. Interacts with IscS.

It is found in the cytoplasm. It participates in tRNA modification. Functionally, sulfur carrier protein involved in sulfur trafficking in the cell. Part of a sulfur-relay system required for 2-thiolation during synthesis of 2-thiouridine of the modified wobble base 5-methylaminomethyl-2-thiouridine (mnm(5)s(2)U) in tRNA. Interacts with IscS and stimulates its cysteine desulfurase activity. Accepts an activated sulfur from IscS, which is then transferred to TusD, and thus determines the direction of sulfur flow from IscS to 2-thiouridine formation. Also appears to be involved in sulfur transfer for the biosynthesis of molybdopterin. In Escherichia coli O17:K52:H18 (strain UMN026 / ExPEC), this protein is Sulfur carrier protein TusA.